We begin with the raw amino-acid sequence, 96 residues long: Small ribosomal subunit protein uS15 (96 aa).

Belongs to the universal ribosomal protein uS15 family. In terms of assembly, part of the 30S ribosomal subunit. Forms a bridge to the 50S subunit in the 70S ribosome, contacting the 23S rRNA.

Functionally, one of the primary rRNA binding proteins, it binds directly to 16S rRNA where it helps nucleate assembly of the platform of the 30S subunit by binding and bridging several RNA helices of the 16S rRNA. In terms of biological role, forms an intersubunit bridge (bridge B4) with the 23S rRNA of the 50S subunit in the ribosome. This is Small ribosomal subunit protein uS15 from Streptomyces griseus subsp. griseus (strain JCM 4626 / CBS 651.72 / NBRC 13350 / KCC S-0626 / ISP 5235).